Reading from the N-terminus, the 412-residue chain is 2,3-bisphosphoglycerate-independent phosphoglycerate mutase (412 aa).

Belongs to the BPG-independent phosphoglycerate mutase family. A-PGAM subfamily.

The catalysed reaction is (2R)-2-phosphoglycerate = (2R)-3-phosphoglycerate. The protein operates within carbohydrate degradation; glycolysis; pyruvate from D-glyceraldehyde 3-phosphate: step 3/5. Functionally, catalyzes the interconversion of 2-phosphoglycerate and 3-phosphoglycerate. In Methanobrevibacter smithii (strain ATCC 35061 / DSM 861 / OCM 144 / PS), this protein is 2,3-bisphosphoglycerate-independent phosphoglycerate mutase.